The sequence spans 1040 residues: MQVLPPGSTGGPSRLFILRPVATTLLMAAILLAGIIGYRFLPVAALPEVDYPTIQVVTLYPGASPDVMTSAVTAPLERQFGQMSGLKQMSSQSSGGASVVTLQFQLTLPLDVAEQEVQAAINAATNLLPSDLPNPPIYSKVNPADPPIMTLAVTSNSMPMTQVEDMVETRVAQKISQVSGVGLVTLAGGQRPAVRVKLNAQAVAALGLTSETVRTAITGANVNSAKGSLDGPERAVTLSANDQMQSADEYRRLIIAYQNGAPVRLGDVATVEQGAENSWLGAWANQAPAIVMNVQRQPGANIIATADSIRQMLPQLTESLPKSVKVTVLSDRTTNIRASVRDTQFELMLAIALVVMIIYLFLRNIPATIIPGVAVPLSLIGTFAVMVFLDFSINNLTLMALTIATGFVVDDAIVVIENISRYIEKGEKPLAAALKGAGEIGFTIISLTFSLIAVLIPLLFMGDIVGRLFREFAVTLAVAILISAVVSLTLTPMMCARMLSQQSLRKQNRFSRACERMFDRVIASYGRGLAKVLNHPWLTLSVAFATLLLSVMLWIVIPKGFFPVQDNGIIQGTLQAPQSSSYASMAQRQRQVAERILQDPAVQSLTTFVGVDGANPTLNSARLQINLKPLDARDDRVQQVISRLQTAVATIPGVELYLQPTQDLTIDTQVSRTQYQFTLQATTLDALSHWVPKLQNALQSLPQLSEVSSDWQDRGLAAWVNVDRDSASRLGISMADVDNALYNAFGQRLISTIYTQANQYRVVLEHNTASMPGLAALETIRLTSRDGGTVPLSAIARIEQRFAPLSINHLDQFPVTTFSFNVPESYSLGDAVQAILDTEKTLALPADITTQFQGSTLAFQAALGSTVWLIVAAVVAMYIVLGVLYESFIHPITILSTLPTAGVGALLALIIAGSELDIIAIIGIILLIGIVKKNAIMMIDFALAAEREQGMSPRDAIFQACLLRFRPILMTTLAALLGALPLMLSTGVGTELRRPLGIAMVGGLLVSQVLTLFTTPVIYLLFDRLSLYVKSRFPRHKEEA.

The next 11 helical transmembrane spans lie at 15-37, 345-362, 367-389, 396-418, 438-460, 472-494, 535-557, 867-889, 909-931, 968-990, and 1000-1022; these read LFILRPVATTLLMAAILLAGIIG, FELMLAIALVVMIIYLFL, ATIIPGVAVPLSLIGTFAVMVFL, LTLMALTIATGFVVDDAIVVIEN, GEIGFTIISLTFSLIAVLIPLLF, FAVTLAVAILISAVVSLTLTPMM, HPWLTLSVAFATLLLSVMLWIVI, VWLIVAAVVAMYIVLGVLYESFI, LIIAGSELDIIAIIGIILLIGIV, ILMTTLAALLGALPLMLSTGVGT, and MVGGLLVSQVLTLFTTPVIYLLF.

This sequence belongs to the resistance-nodulation-cell division (RND) (TC 2.A.6) family. MdtB subfamily. As to quaternary structure, part of a tripartite efflux system composed of MdtA, MdtB and MdtC. MdtB forms a heteromultimer with MdtC.

It localises to the cell inner membrane. The polypeptide is Multidrug resistance protein MdtB (Salmonella typhimurium (strain LT2 / SGSC1412 / ATCC 700720)).